A 110-amino-acid chain; its full sequence is Nucleoid-associated protein bbp_426 (110 aa).

It belongs to the YbaB/EbfC family. As to quaternary structure, homodimer.

It localises to the cytoplasm. It is found in the nucleoid. In terms of biological role, binds to DNA and alters its conformation. May be involved in regulation of gene expression, nucleoid organization and DNA protection. The protein is Nucleoid-associated protein bbp_426 of Buchnera aphidicola subsp. Baizongia pistaciae (strain Bp).